The sequence spans 90 residues: Small ribosomal subunit protein bS18 (90 aa).

Positions 1–24 (MKPMRQKPGRGQGNKSISNALASK) are disordered.

This sequence belongs to the bacterial ribosomal protein bS18 family. Part of the 30S ribosomal subunit. Forms a tight heterodimer with protein bS6.

In terms of biological role, binds as a heterodimer with protein bS6 to the central domain of the 16S rRNA, where it helps stabilize the platform of the 30S subunit. This Chlorobium phaeovibrioides (strain DSM 265 / 1930) (Prosthecochloris vibrioformis (strain DSM 265)) protein is Small ribosomal subunit protein bS18.